The primary structure comprises 261 residues: Calcium-binding protein 8 (261 aa).

The disordered stretch occupies residues 1 to 41; it reads MRLPEQPGDGKPENETKGDQETPERGEEPRRSPAPDFPTWE. At 1-234 the chain is on the cytoplasmic side; the sequence is MRLPEQPGDG…QNRQTCVRKS (234 aa). The span at 8-33 shows a compositional bias: basic and acidic residues; the sequence is GDGKPENETKGDQETPERGEEPRRSP. EF-hand domains lie at 78–113 and 114–149; these read EELD…LGYM and PSEV…KLVS. 9 residues coordinate Ca(2+): D91, D93, N95, E102, D127, D129, D131, Q133, and E138. A helical; Anchor for type IV membrane protein membrane pass occupies residues 235–255; it reads LICAFAMAFIISVMLIAANQI. Over 256 to 261 the chain is Extracellular; that stretch reads LRSGME.

Interacts with PI4KB. This binding competes with FREQ/NCS1 binding in a calcium-dependent manner. As to expression, brain-specific. High expression in the cerebellum, hippocampus, and cortex.

The protein resides in the golgi apparatus. It localises to the trans-Golgi network membrane. Its subcellular location is the cytoplasm. It is found in the perinuclear region. The protein localises to the cell membrane. In terms of biological role, negatively regulates Golgi-to-plasma membrane trafficking by interacting with PI4KB and inhibiting its activity. May play a role in the physiology of neurons and is potentially important in memory and learning. This chain is Calcium-binding protein 8 (Caln1), found in Mus musculus (Mouse).